The primary structure comprises 365 residues: Succinyl-diaminopimelate desuccinylase (365 aa).

His-64 provides a ligand contact to Zn(2+). Asp-66 is a catalytic residue. Position 95 (Asp-95) interacts with Zn(2+). Glu-125 (proton acceptor) is an active-site residue. Zn(2+)-binding residues include Glu-126, Glu-154, and His-339.

It belongs to the peptidase M20A family. DapE subfamily. In terms of assembly, homodimer. It depends on Zn(2+) as a cofactor. Co(2+) is required as a cofactor.

It carries out the reaction N-succinyl-(2S,6S)-2,6-diaminopimelate + H2O = (2S,6S)-2,6-diaminopimelate + succinate. It participates in amino-acid biosynthesis; L-lysine biosynthesis via DAP pathway; LL-2,6-diaminopimelate from (S)-tetrahydrodipicolinate (succinylase route): step 3/3. Its function is as follows. Catalyzes the hydrolysis of N-succinyl-L,L-diaminopimelic acid (SDAP), forming succinate and LL-2,6-diaminopimelate (DAP), an intermediate involved in the bacterial biosynthesis of lysine and meso-diaminopimelic acid, an essential component of bacterial cell walls. This chain is Succinyl-diaminopimelate desuccinylase, found in Nautilia profundicola (strain ATCC BAA-1463 / DSM 18972 / AmH).